The sequence spans 104 residues: Chemokine-like protein MC148 (104 aa).

Interacts with host CXCL12.

Its function is as follows. Plays a role in antagonizing the chemotaxis of multiple leukocyte subsets induced by CC and CXC chemokines. Displaces the interaction between CXCL12 and CXCR4 and thereby inactivates the antiviral activity of host CXCL12. The chain is Chemokine-like protein MC148 (MC148) from Homo sapiens (Human).